Here is a 792-residue protein sequence, read N- to C-terminus: Zinc finger protein 606 (792 aa).

Residues 62-133 (VTFKDVAVDF…EQACPQRTCP (72 aa)) enclose the KRAB domain. The segment at 289-311 (FKCTDAVKSFNHIIHFGDHKGIH) adopts a C2H2-type 1; degenerate zinc-finger fold. The C2H2-type 2; degenerate zinc-finger motif lies at 317-344 (YEYKECHQIFNQSPSFNEHPRLHVGENQ). A C2H2-type 3; degenerate zinc finger spans residues 400–422 (YDYNECGTSFIWSSYLIQHKKTH). 13 C2H2-type zinc fingers span residues 428–450 (YECDKCGKVFRNRSALTKHERTH), 456–478 (YECNKCGKAFSWNSHLIVHKRIH), 484–506 (YVCNECGKSFNWNSHLIGHQRTH), 512–534 (FECTECGKSFSWSSHLIAHMRMH), 540–562 (FKCDECEKAFRDYSALSKHERTH), 568–590 (YKCTECGKSFSWSSHLIAHQRTH), 596–618 (YNCQECGKAFRERSALTKHEIIH), 624–646 (YECNKCGKSCSQMAHLVRHQRTH), 652–674 (YECNKCGKSFSQSCHLVAHRRIH), 680–702 (YKCNQCERSFNCSSHLIAHRRTH), 708–730 (YRCNECGKAFNESSSLIVHLRNH), 736–758 (YKCNHCEKAFCKNSSLIIHQRMH), and 764–786 (FICSECGKAFSGHSALLQHQRNH).

Belongs to the krueppel C2H2-type zinc-finger protein family. As to expression, widely expressed in adult and fetal tissues.

It is found in the nucleus. In terms of biological role, may act as a transcriptional repressor. The polypeptide is Zinc finger protein 606 (ZNF606) (Homo sapiens (Human)).